Consider the following 212-residue polypeptide: ER lumen protein-retaining receptor 1-A (212 aa).

At 1–4 (MNIF) the chain is on the lumenal side. A helical transmembrane segment spans residues 5–24 (RFLGDISHLSAIFILLLKIW). The Cytoplasmic segment spans residues 25-32 (KSRSCAGI). The chain crosses the membrane as a helical span at residues 33–52 (SGKSQLLFAIVFTARYLDLF). Residues 47–48 (RY) form an interaction with the K-D-E-L motif on target proteins region. Over 53–58 (TNYISF) the chain is Lumenal. The helical transmembrane segment at 59–79 (YNTSMKVVYVASSYATVWMIY) threads the bilayer. At 80-92 (SKFKATYDGNHDT) the chain is on the cytoplasmic side. The helical transmembrane segment at 93–110 (FRVEFLIVPTAILAFLVN) threads the bilayer. Residues 111 to 116 (HDFTPL) lie on the Lumenal side of the membrane. A helical membrane pass occupies residues 117–135 (EIFWTFSIYLESVAILPQL). The Cytoplasmic portion of the chain corresponds to 136–149 (FMVSKTGEAETITS). A helical membrane pass occupies residues 150–168 (HYLFALGIYRTLYLFNWIW). Residues 159–169 (RTLYLFNWIWR) form an interaction with the K-D-E-L motif on target proteins region. The Lumenal portion of the chain corresponds to 169–178 (RYQFEGFFDL). The helical transmembrane segment at 179-199 (IAIVAGLVQTVLYCDFFYLYV) threads the bilayer. Over 200–212 (TKVLKGKKLSLPA) the chain is Cytoplasmic. The interval 204–207 (KGKK) is important for recycling of cargo proteins with the sequence motif K-D-E-L from the Golgi to the endoplasmic reticulum.

The protein belongs to the ERD2 family.

The protein localises to the golgi apparatus membrane. The protein resides in the cytoplasmic vesicle. It localises to the COPI-coated vesicle membrane. Its subcellular location is the endoplasmic reticulum membrane. It is found in the endoplasmic reticulum-Golgi intermediate compartment membrane. Receptor for the C-terminal sequence motif K-D-E-L that is present on endoplasmic reticulum resident proteins and that mediates their recycling from the Golgi back to the endoplasmic reticulum. The polypeptide is ER lumen protein-retaining receptor 1-A (kdelr1-a) (Xenopus laevis (African clawed frog)).